The chain runs to 87 residues: Putative defensin-like protein 169 (87 aa).

Residues 1 to 21 (MKKTFSFTVLILFVIPLLVTG) form the signal peptide. 4 disulfides stabilise this stretch: Cys-36–Cys-86, Cys-48–Cys-74, Cys-53–Cys-80, and Cys-57–Cys-82.

The protein belongs to the DEFL family.

It localises to the secreted. In Arabidopsis thaliana (Mouse-ear cress), this protein is Putative defensin-like protein 169.